Reading from the N-terminus, the 178-residue chain is Ribosome maturation factor RimM (178 aa).

Residues 100–178 enclose the PRC barrel domain; the sequence is TDGEYYWYQL…EMKVEWDADF (79 aa).

This sequence belongs to the RimM family. In terms of assembly, binds ribosomal protein uS19.

The protein resides in the cytoplasm. Its function is as follows. An accessory protein needed during the final step in the assembly of 30S ribosomal subunit, possibly for assembly of the head region. Essential for efficient processing of 16S rRNA. May be needed both before and after RbfA during the maturation of 16S rRNA. It has affinity for free ribosomal 30S subunits but not for 70S ribosomes. The sequence is that of Ribosome maturation factor RimM from Pseudomonas fluorescens (strain SBW25).